We begin with the raw amino-acid sequence, 84 residues long: ATP synthase subunit c (84 aa).

A run of 2 helical transmembrane segments spans residues 9-29 (IIGASILLAFAALGTAIGFAI) and 54-74 (IVAGLLDAIAMIAVGISLLFI).

Belongs to the ATPase C chain family. F-type ATPases have 2 components, F(1) - the catalytic core - and F(0) - the membrane proton channel. F(1) has five subunits: alpha(3), beta(3), gamma(1), delta(1), epsilon(1). F(0) has three main subunits: a(1), b(2) and c(10-14). The alpha and beta chains form an alternating ring which encloses part of the gamma chain. F(1) is attached to F(0) by a central stalk formed by the gamma and epsilon chains, while a peripheral stalk is formed by the delta and b chains.

Its subcellular location is the cell inner membrane. Its function is as follows. F(1)F(0) ATP synthase produces ATP from ADP in the presence of a proton or sodium gradient. F-type ATPases consist of two structural domains, F(1) containing the extramembraneous catalytic core and F(0) containing the membrane proton channel, linked together by a central stalk and a peripheral stalk. During catalysis, ATP synthesis in the catalytic domain of F(1) is coupled via a rotary mechanism of the central stalk subunits to proton translocation. Functionally, key component of the F(0) channel; it plays a direct role in translocation across the membrane. A homomeric c-ring of between 10-14 subunits forms the central stalk rotor element with the F(1) delta and epsilon subunits. The polypeptide is ATP synthase subunit c (Actinobacillus pleuropneumoniae serotype 7 (strain AP76)).